A 943-amino-acid chain; its full sequence is Tyrosine-protein kinase transmembrane receptor ROR2 (943 aa).

A signal peptide spans 1-33 (MARGSALPRRPLLCIPAVWAAAALLLSVSRTSG). Residues 34–403 (EVEVLDPNDP…CSPRDSSKMG (370 aa)) lie on the Extracellular side of the membrane. Residues 55–145 (PTLKGYFLNF…VATNGMKTIT (91 aa)) form the Ig-like C2-type domain. A glycan (N-linked (GlcNAc...) asparagine) is linked at Asn-70. Cystine bridges form between Cys-83–Cys-135, Cys-174–Cys-239, Cys-182–Cys-232, Cys-223–Cys-264, Cys-252–Cys-300, Cys-256–Cys-286, Cys-316–Cys-394, Cys-337–Cys-377, and Cys-365–Cys-389. Residues 169 to 303 (HEDGFCQPYR…SPDAANCMRI (135 aa)) enclose the FZ domain. Asn-188 carries an N-linked (GlcNAc...) asparagine glycan. The Kringle domain occupies 316–394 (CYNGSGMDYR…RMELCDVPSC (79 aa)). An N-linked (GlcNAc...) asparagine glycan is attached at Asn-318. A helical transmembrane segment spans residues 404-424 (ILYILVPSIAIPLVIACLFFL). Topologically, residues 425–943 (VCMCRNKQKA…VDEAQVQLEA (519 aa)) are cytoplasmic. A sulfoserine; partial mark is found at Ser-469 and Ser-471. One can recognise a Protein kinase domain in the interval 473–746 (VRFMEELGED…PRFKDIHSRL (274 aa)). ATP is bound by residues 479-487 (LGEDRFGKV) and Lys-507. Asp-615 serves as the catalytic Proton acceptor. At Tyr-646 the chain carries Phosphotyrosine; by autocatalysis. Disordered regions lie at residues 757 to 796 (SSAQ…APPF) and 850 to 931 (QVPP…DCDT). Low complexity-rich tracts occupy residues 765-791 (SNTT…GPKQ) and 857-872 (PKPS…TSTG). Arg-785 carries the asymmetric dimethylarginine modification. Residues 873–883 (YVTTAPSNTSM) show a composition bias toward polar residues.

This sequence belongs to the protein kinase superfamily. Tyr protein kinase family. ROR subfamily. In terms of assembly, homodimer; promotes osteogenesis. Binds YWHAB. Interacts with WTIP. Interacts with ROR2. The cofactor is Mg(2+).

The protein localises to the cell membrane. The enzyme catalyses L-tyrosyl-[protein] + ATP = O-phospho-L-tyrosyl-[protein] + ADP + H(+). Functionally, tyrosine-protein kinase receptor which may be involved in the early formation of the chondrocytes. It seems to be required for cartilage and growth plate development. Phosphorylates YWHAB, leading to induction of osteogenesis and bone formation. In contrast, has also been shown to have very little tyrosine kinase activity in vitro. May act as a receptor for wnt ligand WNT5A which may result in the inhibition of WNT3A-mediated signaling. This chain is Tyrosine-protein kinase transmembrane receptor ROR2 (ROR2), found in Homo sapiens (Human).